The primary structure comprises 211 residues: Large ribosomal subunit protein bL25 (211 aa).

Positions 185–211 (ESTTPAATEGEETEAAAAAPEPAAEDK) are disordered. Positions 199-211 (AAAAAPEPAAEDK) are enriched in low complexity.

Belongs to the bacterial ribosomal protein bL25 family. CTC subfamily. In terms of assembly, part of the 50S ribosomal subunit; part of the 5S rRNA/L5/L18/L25 subcomplex. Contacts the 5S rRNA. Binds to the 5S rRNA independently of L5 and L18.

Functionally, this is one of the proteins that binds to the 5S RNA in the ribosome where it forms part of the central protuberance. This Treponema denticola (strain ATCC 35405 / DSM 14222 / CIP 103919 / JCM 8153 / KCTC 15104) protein is Large ribosomal subunit protein bL25.